The sequence spans 143 residues: Large ribosomal subunit protein uL13 (143 aa).

It belongs to the universal ribosomal protein uL13 family. In terms of assembly, part of the 50S ribosomal subunit.

This protein is one of the early assembly proteins of the 50S ribosomal subunit, although it is not seen to bind rRNA by itself. It is important during the early stages of 50S assembly. This Desulfitobacterium hafniense (strain DSM 10664 / DCB-2) protein is Large ribosomal subunit protein uL13.